The chain runs to 345 residues: Biotin synthase (345 aa).

Residues 38-256 form the Radical SAM core domain; that stretch reads RQVQVSTLLS…IAVARIMMPA (219 aa). [4Fe-4S] cluster is bound by residues cysteine 53, cysteine 57, and cysteine 60. [2Fe-2S] cluster is bound by residues cysteine 97, cysteine 128, cysteine 188, and arginine 260.

Belongs to the radical SAM superfamily. Biotin synthase family. Homodimer. [4Fe-4S] cluster is required as a cofactor. Requires [2Fe-2S] cluster as cofactor.

It catalyses the reaction (4R,5S)-dethiobiotin + (sulfur carrier)-SH + 2 reduced [2Fe-2S]-[ferredoxin] + 2 S-adenosyl-L-methionine = (sulfur carrier)-H + biotin + 2 5'-deoxyadenosine + 2 L-methionine + 2 oxidized [2Fe-2S]-[ferredoxin]. It functions in the pathway cofactor biosynthesis; biotin biosynthesis; biotin from 7,8-diaminononanoate: step 2/2. Functionally, catalyzes the conversion of dethiobiotin (DTB) to biotin by the insertion of a sulfur atom into dethiobiotin via a radical-based mechanism. The chain is Biotin synthase from Serratia proteamaculans (strain 568).